Reading from the N-terminus, the 174-residue chain is F-box protein At1g70360 (174 aa).

Residues 136–174 (PPCFISLPRELKHKILESLPGVDIGTLACVSSELRDMAS) form the F-box domain.

This chain is F-box protein At1g70360, found in Arabidopsis thaliana (Mouse-ear cress).